Consider the following 751-residue polypeptide: Ecdysteroid-phosphate phosphatase (751 aa).

Positions 16 to 60 constitute a UBA domain; that stretch reads CISKQHLTPLQTLLQMGFPRHRAEKALASTGNRGVQIASDWLLAH. One can recognise an SH3 domain in the interval 271-336; it reads ATKQVQKVVY…PVNYTERTAE (66 aa). Disordered regions lie at residues 367–394 and 458–484; these read GRSI…FEES and EPPA…PGSL. Positions 466–479 are enriched in basic and acidic residues; it reads RPDDTLSVHSDHSL. A phosphatase-like region spans residues 490–751; sequence KNRKIYIMRH…RFEWNALSAT (262 aa). Residue Arg-498 is part of the active site. Catalysis depends on His-499, which acts as the Tele-phosphohistidine intermediate. Residue His-681 is part of the active site.

Its subcellular location is the cytoplasm. The protein localises to the cytosol. The protein resides in the nucleus. The catalysed reaction is ecdysone 22-phosphate + H2O = ecdysone + phosphate. It carries out the reaction 20-hydroxyecdysone 22-phosphate + H2O = 20-hydroxyecdysone + phosphate. The enzyme catalyses 2-deoxyecdysone 22-phosphate + H2O = 2-deoxyecdysone + phosphate. Functionally, steroid phosphatase that dephosphorylates ecdysteroids such as ecdysone 22-phosphate (E22P), 3-epi-ecdysone 22-phosphate (E22P) and 3-epi-ecdysone 2-phosphate (E2P). Likely catalyzes the conversion of inactive phosphorylated ecdysteroids into their active forms. Shows high activity towards ecdysone 22-phosphate (E22P), but is also significantly active against 3-epi-ecdysone 22-phosphate (E22P) and 3-epi-ecdysone 2-phosphate (E2P). Also displays acid phosphatase activity towards 4-nitrophenyl phosphate (pNNP) in vitro. Has no activity towards 3-epi-ecdysone 3-phosphate (E3P). The polypeptide is Ecdysteroid-phosphate phosphatase (Drosophila melanogaster (Fruit fly)).